The sequence spans 422 residues: Adenylosuccinate synthetase (422 aa).

GTP contacts are provided by residues 11-17 (GDEGKGK) and 39-41 (GHT). D12 serves as the catalytic Proton acceptor. Mg(2+) contacts are provided by D12 and G39. Residues 12-15 (DEGK), 37-40 (NAGH), T129, R143, N220, T235, and R299 each bind IMP. Catalysis depends on H40, which acts as the Proton donor. A substrate-binding site is contributed by 295 to 301 (VTTGRKR). GTP contacts are provided by residues R301, 327–329 (KLD), and 410–412 (GTG).

The protein belongs to the adenylosuccinate synthetase family. Homodimer. Mg(2+) is required as a cofactor.

It localises to the cytoplasm. It catalyses the reaction IMP + L-aspartate + GTP = N(6)-(1,2-dicarboxyethyl)-AMP + GDP + phosphate + 2 H(+). Its pathway is purine metabolism; AMP biosynthesis via de novo pathway; AMP from IMP: step 1/2. In terms of biological role, plays an important role in the de novo pathway and in the salvage pathway of purine nucleotide biosynthesis. Catalyzes the first committed step in the biosynthesis of AMP from IMP. The sequence is that of Adenylosuccinate synthetase from Arthroderma otae (strain ATCC MYA-4605 / CBS 113480) (Microsporum canis).